The chain runs to 262 residues: Acyl-[acyl-carrier-protein]--UDP-N-acetylglucosamine O-acyltransferase (262 aa).

The protein belongs to the transferase hexapeptide repeat family. LpxA subfamily. As to quaternary structure, homotrimer.

It localises to the cytoplasm. The enzyme catalyses a (3R)-hydroxyacyl-[ACP] + UDP-N-acetyl-alpha-D-glucosamine = a UDP-3-O-[(3R)-3-hydroxyacyl]-N-acetyl-alpha-D-glucosamine + holo-[ACP]. The protein operates within glycolipid biosynthesis; lipid IV(A) biosynthesis; lipid IV(A) from (3R)-3-hydroxytetradecanoyl-[acyl-carrier-protein] and UDP-N-acetyl-alpha-D-glucosamine: step 1/6. Functionally, involved in the biosynthesis of lipid A, a phosphorylated glycolipid that anchors the lipopolysaccharide to the outer membrane of the cell. The protein is Acyl-[acyl-carrier-protein]--UDP-N-acetylglucosamine O-acyltransferase of Burkholderia vietnamiensis (strain G4 / LMG 22486) (Burkholderia cepacia (strain R1808)).